The sequence spans 392 residues: tRNA (guanine-N(7)-)-methyltransferase (392 aa).

Positions 123, 148, and 175 each coordinate S-adenosyl-L-methionine. Substrate-binding residues include Lys-201 and Asp-231.

It belongs to the class I-like SAM-binding methyltransferase superfamily. TrmB family.

It carries out the reaction guanosine(46) in tRNA + S-adenosyl-L-methionine = N(7)-methylguanosine(46) in tRNA + S-adenosyl-L-homocysteine. It participates in tRNA modification; N(7)-methylguanine-tRNA biosynthesis. Its function is as follows. Catalyzes the formation of N(7)-methylguanine at position 46 (m7G46) in tRNA. This chain is tRNA (guanine-N(7)-)-methyltransferase, found in Campylobacter jejuni subsp. jejuni serotype O:6 (strain 81116 / NCTC 11828).